Reading from the N-terminus, the 162-residue chain is Universal stress protein MJ0577 (162 aa).

Residues Pro-11, Val-41, Gly-127–Asn-133, and Ser-141–Thr-143 contribute to the ATP site.

The protein belongs to the universal stress protein A family. Homodimer. Mn(2+) serves as cofactor.

Its subcellular location is the cytoplasm. The sequence is that of Universal stress protein MJ0577 from Methanocaldococcus jannaschii (strain ATCC 43067 / DSM 2661 / JAL-1 / JCM 10045 / NBRC 100440) (Methanococcus jannaschii).